A 251-amino-acid polypeptide reads, in one-letter code: tRNA (guanine-N(1)-)-methyltransferase (251 aa).

Residues G113 and 133–138 (IGDYVL) each bind S-adenosyl-L-methionine.

The protein belongs to the RNA methyltransferase TrmD family. As to quaternary structure, homodimer.

The protein resides in the cytoplasm. It carries out the reaction guanosine(37) in tRNA + S-adenosyl-L-methionine = N(1)-methylguanosine(37) in tRNA + S-adenosyl-L-homocysteine + H(+). Its function is as follows. Specifically methylates guanosine-37 in various tRNAs. The sequence is that of tRNA (guanine-N(1)-)-methyltransferase from Pectobacterium atrosepticum (strain SCRI 1043 / ATCC BAA-672) (Erwinia carotovora subsp. atroseptica).